The chain runs to 282 residues: Glycine/sarcosine N-methyltransferase (282 aa).

Residues 1-23 (MTSTQNHPLQTQDDQQRFGQSPE) are compositionally biased toward polar residues. Residues 1–27 (MTSTQNHPLQTQDDQQRFGQSPESVRE) form a disordered region. Residues Y35, W43, R52, A76, D97, 123–124 (DW), and L141 contribute to the S-adenosyl-L-methionine site. N143, R176, and Y217 together coordinate substrate.

It belongs to the class I-like SAM-binding methyltransferase superfamily. Glycine N-methyltransferase family. As to quaternary structure, monomer.

It catalyses the reaction glycine + 2 S-adenosyl-L-methionine = N,N-dimethylglycine + 2 S-adenosyl-L-homocysteine + 2 H(+). The catalysed reaction is glycine + S-adenosyl-L-methionine = sarcosine + S-adenosyl-L-homocysteine + H(+). It carries out the reaction sarcosine + S-adenosyl-L-methionine = N,N-dimethylglycine + S-adenosyl-L-homocysteine + H(+). The protein operates within amine and polyamine biosynthesis; betaine biosynthesis via glycine pathway; betaine from glycine: step 1/3. It functions in the pathway amine and polyamine biosynthesis; betaine biosynthesis via glycine pathway; betaine from glycine: step 2/3. Functionally, catalyzes the methylation of glycine and sarcosine to sarcosine and dimethylglycine, respectively, with S-adenosylmethionine (AdoMet) acting as the methyl donor. It has strict specificity for glycine and sarcosine as the methyl group acceptors. The protein is Glycine/sarcosine N-methyltransferase of Parasynechococcus marenigrum (strain WH8102).